The chain runs to 202 residues: Lipoprotein signal peptidase (202 aa).

The interval 1–29 (MPDEPTGSADPLTSTEEAGGAGEPNAPAP) is disordered. 3 helical membrane passes run 35–55 (MLLS…VVAV), 88–108 (GYTW…FWMG), and 112–132 (VSPW…GNLV). Active-site residues include aspartate 148 and aspartate 162. Residues 160–180 (VADPSVVGGAILLVILSIFGF) form a helical membrane-spanning segment.

Belongs to the peptidase A8 family.

Its subcellular location is the cell membrane. It carries out the reaction Release of signal peptides from bacterial membrane prolipoproteins. Hydrolyzes -Xaa-Yaa-Zaa-|-(S,diacylglyceryl)Cys-, in which Xaa is hydrophobic (preferably Leu), and Yaa (Ala or Ser) and Zaa (Gly or Ala) have small, neutral side chains.. The protein operates within protein modification; lipoprotein biosynthesis (signal peptide cleavage). This protein specifically catalyzes the removal of signal peptides from prolipoproteins. This Mycobacterium bovis (strain ATCC BAA-935 / AF2122/97) protein is Lipoprotein signal peptidase.